Reading from the N-terminus, the 252-residue chain is E3 ubiquitin-protein ligase MARCHF3 (252 aa).

The RING-CH-type zinc finger occupies 62-122 (SSFNDHPMCR…ELCHFRFSVE (61 aa)). Zn(2+) contacts are provided by C70, C73, C86, C88, H96, C99, C112, and C115. The next 2 helical transmembrane spans lie at 144-164 (LFGDMVCFLFITPLATISGWL) and 181-201 (AVGLIALTVALFTIYLFWTLV).

It localises to the cytoplasmic vesicle membrane. Its subcellular location is the early endosome membrane. The catalysed reaction is S-ubiquitinyl-[E2 ubiquitin-conjugating enzyme]-L-cysteine + [acceptor protein]-L-lysine = [E2 ubiquitin-conjugating enzyme]-L-cysteine + N(6)-ubiquitinyl-[acceptor protein]-L-lysine.. It functions in the pathway protein modification; protein ubiquitination. In terms of biological role, E3 ubiquitin-protein ligase which may be involved in endosomal trafficking. E3 ubiquitin ligases accept ubiquitin from an E2 ubiquitin-conjugating enzyme in the form of a thioester and then directly transfer the ubiquitin to targeted substrates. In Xenopus laevis (African clawed frog), this protein is E3 ubiquitin-protein ligase MARCHF3 (marchf3).